The primary structure comprises 173 residues: Peptide deformylase (173 aa).

Residues C91 and H133 each contribute to the Fe cation site. The active site involves E134. H137 contacts Fe cation.

The protein belongs to the polypeptide deformylase family. Fe(2+) serves as cofactor.

The enzyme catalyses N-terminal N-formyl-L-methionyl-[peptide] + H2O = N-terminal L-methionyl-[peptide] + formate. Functionally, removes the formyl group from the N-terminal Met of newly synthesized proteins. Requires at least a dipeptide for an efficient rate of reaction. N-terminal L-methionine is a prerequisite for activity but the enzyme has broad specificity at other positions. The polypeptide is Peptide deformylase (Buchnera aphidicola subsp. Acyrthosiphon pisum (strain 5A)).